Consider the following 239-residue polypeptide: Ribonuclease 3 (239 aa).

Residues 18–141 form the RNase III domain; it reads YTTLEKALGY…LMAGVYLEAG (124 aa). Glu-54 is a binding site for Mg(2+). The active site involves Asp-58. Ser-127 and Glu-130 together coordinate Mg(2+). Glu-130 is an active-site residue. The DRBM domain maps to 168–237; it reads DYKTALQELT…AYYALQKLKE (70 aa).

The protein belongs to the ribonuclease III family. Homodimer. Mg(2+) serves as cofactor.

The protein resides in the cytoplasm. The catalysed reaction is Endonucleolytic cleavage to 5'-phosphomonoester.. Its function is as follows. Digests double-stranded RNA. Involved in the processing of primary rRNA transcript to yield the immediate precursors to the large and small rRNAs (23S and 16S). Processes some mRNAs, and tRNAs when they are encoded in the rRNA operon. Processes pre-crRNA and tracrRNA of type II CRISPR loci if present in the organism. The protein is Ribonuclease 3 of Helicobacter pylori (strain G27).